A 565-amino-acid chain; its full sequence is CTP synthase (565 aa).

Positions 1 to 272 are amidoligase domain; that stretch reads MARPKNVKHI…DLRVMKKLGL (272 aa). S18 provides a ligand contact to CTP. S18 is a UTP binding site. 19-24 is a binding site for ATP; sequence SLGKGI. Y59 contacts L-glutamine. D76 is a binding site for ATP. D76 and E146 together coordinate Mg(2+). Residues 153–155, 193–198, and K229 each bind CTP; these read DIE and KTKPTQ. UTP is bound by residues 193-198 and K229; that span reads KTKPTQ. In terms of domain architecture, Glutamine amidotransferase type-1 spans 299–543; that stretch reads TIGICGKYTE…VHAAKEFAQG (245 aa). L-glutamine is bound at residue G363. C390 functions as the Nucleophile; for glutamine hydrolysis in the catalytic mechanism. L-glutamine contacts are provided by residues 391-394, E414, and R471; that span reads LGMQ. Catalysis depends on residues H516 and E518.

Belongs to the CTP synthase family. Homotetramer.

The enzyme catalyses UTP + L-glutamine + ATP + H2O = CTP + L-glutamate + ADP + phosphate + 2 H(+). The catalysed reaction is L-glutamine + H2O = L-glutamate + NH4(+). It carries out the reaction UTP + NH4(+) + ATP = CTP + ADP + phosphate + 2 H(+). It functions in the pathway pyrimidine metabolism; CTP biosynthesis via de novo pathway; CTP from UDP: step 2/2. With respect to regulation, allosterically activated by GTP, when glutamine is the substrate; GTP has no effect on the reaction when ammonia is the substrate. The allosteric effector GTP functions by stabilizing the protein conformation that binds the tetrahedral intermediate(s) formed during glutamine hydrolysis. Inhibited by the product CTP, via allosteric rather than competitive inhibition. Its function is as follows. Catalyzes the ATP-dependent amination of UTP to CTP with either L-glutamine or ammonia as the source of nitrogen. Regulates intracellular CTP levels through interactions with the four ribonucleotide triphosphates. The protein is CTP synthase of Chlorobaculum tepidum (strain ATCC 49652 / DSM 12025 / NBRC 103806 / TLS) (Chlorobium tepidum).